The chain runs to 362 residues: Probable cysteine protease RDL2 (362 aa).

The signal sequence occupies residues 1-28 (MAATPIRVIVSALVILSVLLLSSSLGVA). The propeptide at 29–129 (TETEIERNET…ERYLYKEGDV (101 aa)) is activation peptide. N-linked (GlcNAc...) asparagine glycosylation is present at Asn36. 2 disulfide bridges follow: Cys151–Cys194 and Cys185–Cys228. The active site involves Cys154. An N-linked (GlcNAc...) asparagine glycan is attached at Asn234. A disulfide bridge links Cys287 with Cys338. Active-site residues include His293 and Asn313.

This sequence belongs to the peptidase C1 family.

In terms of biological role, probable thiol protease. The polypeptide is Probable cysteine protease RDL2 (Arabidopsis thaliana (Mouse-ear cress)).